The sequence spans 214 residues: U3 small nucleolar RNA-associated protein 16 (214 aa).

Over residues 1-10 (MSNGHVKFDA) the composition is skewed to basic and acidic residues. The interval 1–106 (MSNGHVKFDA…KSVNETEVTD (106 aa)) is disordered. A Phosphoserine modification is found at Ser16. Over residues 22–41 (DRQDDVLVISKKDKEVHSSS) the composition is skewed to basic and acidic residues. Residues 42–52 (DEESDDDDAPQ) are compositionally biased toward acidic residues. Ser45, Ser65, and Ser144 each carry phosphoserine. Basic and acidic residues predominate over residues 54–75 (EGLHSGKSEVESQITQREEAIR). The disordered stretch occupies residues 182–214 (STTQDSKTLPPKKESSIIRSKDRWLNRKALNKG). The segment covering 192–206 (PKKESSIIRSKDRWL) has biased composition (basic and acidic residues).

The protein belongs to the UTP16 family. Part of the small subunit (SSU) processome composed of at least 40 protein subunits and the RNA chaperone small nucleolar RNA (snoRNA) U3. Interacts with snoRNA U3. Interacts with MPP10.

It is found in the nucleus. It localises to the nucleolus. Functionally, functions as part of the small subunit (SSU) processome, first precursor of the small eukaryotic ribosomal subunit that coordinates the first two steps of ribosome biogenesis in transcription of the primary transcript pre-RNA and pre-18S processing. During the assembly of the SSU processome in the nucleolus, many ribosome biogenesis factors, an RNA chaperone and ribosomal proteins associate with the nascent pre-rRNA and work in concert to generate RNA folding, modifications, rearrangements and cleavage as well as targeted degradation of pre-ribosomal RNA by the RNA exosome. Has a role in bud site selection maybe via the regulation of expression of bipolar budding components. This Saccharomyces cerevisiae (strain ATCC 204508 / S288c) (Baker's yeast) protein is U3 small nucleolar RNA-associated protein 16 (BUD21).